The following is a 208-amino-acid chain: Large ribosomal subunit protein uL4 (208 aa).

The interval 44–79 is disordered; that stretch reads QRQGTHKSKERSEISGSTRKIGRQKGGGGARRGDMN.

The protein belongs to the universal ribosomal protein uL4 family. In terms of assembly, part of the 50S ribosomal subunit.

One of the primary rRNA binding proteins, this protein initially binds near the 5'-end of the 23S rRNA. It is important during the early stages of 50S assembly. It makes multiple contacts with different domains of the 23S rRNA in the assembled 50S subunit and ribosome. Functionally, forms part of the polypeptide exit tunnel. The protein is Large ribosomal subunit protein uL4 of Bacteroides thetaiotaomicron (strain ATCC 29148 / DSM 2079 / JCM 5827 / CCUG 10774 / NCTC 10582 / VPI-5482 / E50).